The sequence spans 740 residues: Ion-translocating oxidoreductase complex subunit C (740 aa).

4Fe-4S ferredoxin-type domains are found at residues 369 to 397 (GEPQ…QQLY) and 407 to 436 (KATT…VQYF). [4Fe-4S] cluster is bound by residues Cys-377, Cys-380, Cys-383, Cys-387, Cys-416, Cys-419, Cys-422, and Cys-426. The tract at residues 602-716 (KLEQQQANAE…EPEEQVDPRK (115 aa)) is disordered.

This sequence belongs to the 4Fe4S bacterial-type ferredoxin family. RnfC subfamily. As to quaternary structure, the complex is composed of six subunits: RsxA, RsxB, RsxC, RsxD, RsxE and RsxG. [4Fe-4S] cluster serves as cofactor.

The protein resides in the cell inner membrane. In terms of biological role, part of a membrane-bound complex that couples electron transfer with translocation of ions across the membrane. Required to maintain the reduced state of SoxR. The protein is Ion-translocating oxidoreductase complex subunit C of Escherichia coli O139:H28 (strain E24377A / ETEC).